The sequence spans 98 residues: NADH-ubiquinone oxidoreductase chain 4L (98 aa).

The next 3 membrane-spanning stretches (helical) occupy residues 1–21 (MTTI…GVLI), 26–46 (LLST…LMAL), and 59–79 (APLI…ALLV).

This sequence belongs to the complex I subunit 4L family. In terms of assembly, core subunit of respiratory chain NADH dehydrogenase (Complex I) which is composed of 45 different subunits.

It is found in the mitochondrion inner membrane. The enzyme catalyses a ubiquinone + NADH + 5 H(+)(in) = a ubiquinol + NAD(+) + 4 H(+)(out). In terms of biological role, core subunit of the mitochondrial membrane respiratory chain NADH dehydrogenase (Complex I) which catalyzes electron transfer from NADH through the respiratory chain, using ubiquinone as an electron acceptor. Part of the enzyme membrane arm which is embedded in the lipid bilayer and involved in proton translocation. In Rhyncholestes raphanurus (Chilean shrew opossum), this protein is NADH-ubiquinone oxidoreductase chain 4L (MT-ND4L).